A 263-amino-acid chain; its full sequence is Small ribosomal subunit protein uS2 (263 aa).

A compositionally biased stretch (basic and acidic residues) spans 230-249; it reads GEALVNEEKEITDEEKKEVL. Positions 230–263 are disordered; sequence GEALVNEEKEITDEEKKEVLDEAMSEEDFGEEQE. Residues 250–263 show a composition bias toward acidic residues; that stretch reads DEAMSEEDFGEEQE.

This sequence belongs to the universal ribosomal protein uS2 family.

The polypeptide is Small ribosomal subunit protein uS2 (Campylobacter jejuni subsp. jejuni serotype O:2 (strain ATCC 700819 / NCTC 11168)).